The sequence spans 179 residues: ATP synthase subunit delta (179 aa).

It belongs to the ATPase delta chain family. F-type ATPases have 2 components, F(1) - the catalytic core - and F(0) - the membrane proton channel. F(1) has five subunits: alpha(3), beta(3), gamma(1), delta(1), epsilon(1). F(0) has three main subunits: a(1), b(2) and c(10-14). The alpha and beta chains form an alternating ring which encloses part of the gamma chain. F(1) is attached to F(0) by a central stalk formed by the gamma and epsilon chains, while a peripheral stalk is formed by the delta and b chains.

The protein localises to the cell inner membrane. Its function is as follows. F(1)F(0) ATP synthase produces ATP from ADP in the presence of a proton or sodium gradient. F-type ATPases consist of two structural domains, F(1) containing the extramembraneous catalytic core and F(0) containing the membrane proton channel, linked together by a central stalk and a peripheral stalk. During catalysis, ATP synthesis in the catalytic domain of F(1) is coupled via a rotary mechanism of the central stalk subunits to proton translocation. This protein is part of the stalk that links CF(0) to CF(1). It either transmits conformational changes from CF(0) to CF(1) or is implicated in proton conduction. This Burkholderia cenocepacia (strain ATCC BAA-245 / DSM 16553 / LMG 16656 / NCTC 13227 / J2315 / CF5610) (Burkholderia cepacia (strain J2315)) protein is ATP synthase subunit delta.